The primary structure comprises 1197 residues: DNA-directed RNA polymerase subunit beta (1197 aa).

A compositionally biased stretch (polar residues) spans 581-597 (QANSPLNDDGSFTNPTV). 2 disordered regions span residues 581–603 (QANS…RHGD) and 1172–1197 (EKPD…EENV).

It belongs to the RNA polymerase beta chain family. In terms of assembly, the RNAP catalytic core consists of 2 alpha, 1 beta, 1 beta' and 1 omega subunit. When a sigma factor is associated with the core the holoenzyme is formed, which can initiate transcription.

It carries out the reaction RNA(n) + a ribonucleoside 5'-triphosphate = RNA(n+1) + diphosphate. DNA-dependent RNA polymerase catalyzes the transcription of DNA into RNA using the four ribonucleoside triphosphates as substrates. The protein is DNA-directed RNA polymerase subunit beta of Oenococcus oeni (strain ATCC BAA-331 / PSU-1).